Reading from the N-terminus, the 208-residue chain is MTPRGRFITLEGVDGAGKSTHTAWMVQALRDLGLTVLATREPGGTPVGEKLRELLLSEPMALETETLLMFAARCEHVREVIAPALARGEWVVCDRFTDASYAYQGGGRQLGAARVAALEQWVHPDLQPDRTWLFDVPLDVARARLARSRQLDRFEREEDAFFERTRAAYHERARSSDGRIRIIDSSRPLEVVRAQLDSEVRELVAQAA.

12 to 19 (GVDGAGKS) contributes to the ATP binding site.

Belongs to the thymidylate kinase family.

It carries out the reaction dTMP + ATP = dTDP + ADP. Phosphorylation of dTMP to form dTDP in both de novo and salvage pathways of dTTP synthesis. This is Thymidylate kinase from Bordetella bronchiseptica (strain ATCC BAA-588 / NCTC 13252 / RB50) (Alcaligenes bronchisepticus).